Here is a 410-residue protein sequence, read N- to C-terminus: BTB/POZ and MATH domain-containing protein 5 (410 aa).

Residues 1 to 24 (MSESVIQGSNPDRVLSPTSSKSVT) form a disordered region. Positions 28-162 (NGSHQFVIQG…DDCLIINCTV (135 aa)) constitute an MATH domain. One can recognise a BTB domain in the interval 198–264 (SDITFNIAGE…MYKDSLPEDV (67 aa)).

It belongs to the Tdpoz family. In terms of assembly, heterodimer with BPM1 and BPM3. Interacts with RAP2-4. Binds to MYB56 at the promoter of FLOWERING LOCUS T (FT). In terms of tissue distribution, ubiquitous.

The protein resides in the nucleus. It is found in the cytoplasm. It participates in protein modification; protein ubiquitination. Functionally, may act as a substrate-specific adapter of an E3 ubiquitin-protein ligase complex (CUL3-RBX1-BTB) which mediates the ubiquitination and subsequent proteasomal degradation of target proteins. The protein is BTB/POZ and MATH domain-containing protein 5 (BPM5) of Arabidopsis thaliana (Mouse-ear cress).